Here is a 103-residue protein sequence, read N- to C-terminus: UPF0145 protein NT01CX_0170 (103 aa).

This sequence belongs to the UPF0145 family.

The chain is UPF0145 protein NT01CX_0170 from Clostridium novyi (strain NT).